A 744-amino-acid chain; its full sequence is Phosphoribosylformylglycinamidine synthase subunit PurL (744 aa).

The active site involves histidine 49. ATP contacts are provided by tyrosine 52 and lysine 91. Mg(2+) is bound at residue glutamate 93. Residues 94–97 (SHNH) and arginine 116 contribute to the substrate site. Histidine 95 acts as the Proton acceptor in catalysis. Aspartate 117 is a binding site for Mg(2+). Glutamine 240 contributes to the substrate binding site. Aspartate 268 contributes to the Mg(2+) binding site. 312–314 (ESQ) lines the substrate pocket. ATP contacts are provided by aspartate 493 and glycine 530. Asparagine 531 contributes to the Mg(2+) binding site. Residue serine 533 participates in substrate binding.

This sequence belongs to the FGAMS family. In terms of assembly, monomer. Part of the FGAM synthase complex composed of 1 PurL, 1 PurQ and 2 PurS subunits.

It is found in the cytoplasm. It catalyses the reaction N(2)-formyl-N(1)-(5-phospho-beta-D-ribosyl)glycinamide + L-glutamine + ATP + H2O = 2-formamido-N(1)-(5-O-phospho-beta-D-ribosyl)acetamidine + L-glutamate + ADP + phosphate + H(+). It participates in purine metabolism; IMP biosynthesis via de novo pathway; 5-amino-1-(5-phospho-D-ribosyl)imidazole from N(2)-formyl-N(1)-(5-phospho-D-ribosyl)glycinamide: step 1/2. Its function is as follows. Part of the phosphoribosylformylglycinamidine synthase complex involved in the purines biosynthetic pathway. Catalyzes the ATP-dependent conversion of formylglycinamide ribonucleotide (FGAR) and glutamine to yield formylglycinamidine ribonucleotide (FGAM) and glutamate. The FGAM synthase complex is composed of three subunits. PurQ produces an ammonia molecule by converting glutamine to glutamate. PurL transfers the ammonia molecule to FGAR to form FGAM in an ATP-dependent manner. PurS interacts with PurQ and PurL and is thought to assist in the transfer of the ammonia molecule from PurQ to PurL. The sequence is that of Phosphoribosylformylglycinamidine synthase subunit PurL from Nitrobacter hamburgensis (strain DSM 10229 / NCIMB 13809 / X14).